The chain runs to 430 residues: Target of rapamycin complex 1 subunit toc1 (430 aa).

Phosphoserine is present on residues serine 204 and serine 399.

As to quaternary structure, the target of rapamycin complex 1 (TORC1) is composed of at least mip1, pop3/wat1, tco89, toc1 and tor2.

It is found in the cytoplasm. Its function is as follows. Component of TORC1, which regulates multiple cellular processes to control cell growth in response to environmental signals. Tor2 is essential for growth. Nutrient limitation and environmental stress signals cause inactivation of TORC1. Active TORC1 positively controls cell growth and ribosome biogenesis by regulating ribosomal protein gene expression. TORC1 negatively controls G1 cell-cycle arrest, sexual development and amino acid uptake. Represses mating, meiosis and sporulation efficiency by interfering with the functions of the transcription factor ste11 and the meiosis-promoting RNA-binding protein mei2. This chain is Target of rapamycin complex 1 subunit toc1, found in Schizosaccharomyces pombe (strain 972 / ATCC 24843) (Fission yeast).